A 207-amino-acid chain; its full sequence is Microtubule-associated protein Jupiter (207 aa).

Phosphoserine is present on Ser-30. 2 positions are modified to phosphothreonine: Thr-41 and Thr-102. Ser-111, Ser-138, and Ser-149 each carry phosphoserine. Disordered regions lie at residues 129–174 (KGKY…YKAG) and 188–207 (GNQV…SGLW). The span at 136-149 (SGSVSSASSSVSSS) shows a compositional bias: low complexity. A compositionally biased stretch (polar residues) spans 150 to 164 (TENLKINVGNRSDGN).

This sequence belongs to the MAP Jupiter family.

The protein resides in the nucleus. It localises to the cytoplasm. The protein localises to the cytoskeleton. It is found in the spindle. Binds to all microtubule populations. In Drosophila grimshawi (Hawaiian fruit fly), this protein is Microtubule-associated protein Jupiter.